A 335-amino-acid chain; its full sequence is HTH-type transcriptional regulator RipA (335 aa).

The region spanning 119–216 (RKVAQKLIAY…GDTPSSFTSP (98 aa)) is the HTH araC/xylS-type domain. DNA-binding regions (H-T-H motif) lie at residues 136–157 (LEFAQLHNISSRTLQRQFVAST) and 183–206 (IGQVSQMVGFSATSSLTRAFKRHT).

Under iron limitation, represses the acn (aconitase), catA (catechol 1,2 dioxygenase), leuCD (isopropylmalate dehydratase), narKGHJI (nitrite/nitrate transporter and nitrate reductase), sdhCAB (succinate dehydrogenase), pta (phosphotransacetylase) and katA (catalase) genes. This Corynebacterium diphtheriae (strain ATCC 700971 / NCTC 13129 / Biotype gravis) protein is HTH-type transcriptional regulator RipA.